A 712-amino-acid chain; its full sequence is Serrate RNA effector molecule homolog (712 aa).

Disordered regions lie at residues 1 to 80 (MVDS…DSIY), 214 to 256 (ADIK…TEKS), and 620 to 712 (QRPV…DDIP). Composition is skewed to basic and acidic residues over residues 8-26 (GDRR…DYRR) and 34-54 (YDNK…SRGD). Residues 65–79 (RSGNGSDLPTESDSI) show a composition bias toward polar residues. Positions 214-236 (ADIKKDENGNGTEQPKEEPEVKQ) are enriched in basic and acidic residues. The segment covering 240 to 251 (ATEELEEGAIED) has biased composition (acidic residues). 2 stretches are compositionally biased toward basic and acidic residues: residues 621–637 (RPVD…DHRG) and 645–655 (GYGRERDDDRG). Positions 656 to 668 (PGGGGRNSFGGGG) are enriched in gly residues.

Belongs to the ARS2 family.

The protein resides in the nucleus. Functionally, acts as a mediator between the cap-binding complex (CBC) and the primary microRNAs (miRNAs) processing machinery. Contributes to the stability and delivery of capped primary miRNA transcripts to the primary miRNA processing complex, thereby playing a role in RNA-mediated gene silencing (RNAi) by miRNAs. This Caenorhabditis elegans protein is Serrate RNA effector molecule homolog.